A 250-amino-acid polypeptide reads, in one-letter code: 3-deoxy-manno-octulosonate cytidylyltransferase (250 aa).

Belongs to the KdsB family.

The protein localises to the cytoplasm. The enzyme catalyses 3-deoxy-alpha-D-manno-oct-2-ulosonate + CTP = CMP-3-deoxy-beta-D-manno-octulosonate + diphosphate. It functions in the pathway nucleotide-sugar biosynthesis; CMP-3-deoxy-D-manno-octulosonate biosynthesis; CMP-3-deoxy-D-manno-octulosonate from 3-deoxy-D-manno-octulosonate and CTP: step 1/1. Its pathway is bacterial outer membrane biogenesis; lipopolysaccharide biosynthesis. Functionally, activates KDO (a required 8-carbon sugar) for incorporation into bacterial lipopolysaccharide in Gram-negative bacteria. This is 3-deoxy-manno-octulosonate cytidylyltransferase from Rhodopirellula baltica (strain DSM 10527 / NCIMB 13988 / SH1).